The primary structure comprises 336 residues: Biotin synthase (336 aa).

Positions 54–281 (NAIQLSTLLS…KAMVRLSAGR (228 aa)) constitute a Radical SAM core domain. [4Fe-4S] cluster-binding residues include C69, C73, and C76. Residues C113, C144, C204, and R276 each coordinate [2Fe-2S] cluster.

This sequence belongs to the radical SAM superfamily. Biotin synthase family. Homodimer. It depends on [4Fe-4S] cluster as a cofactor. [2Fe-2S] cluster serves as cofactor.

The catalysed reaction is (4R,5S)-dethiobiotin + (sulfur carrier)-SH + 2 reduced [2Fe-2S]-[ferredoxin] + 2 S-adenosyl-L-methionine = (sulfur carrier)-H + biotin + 2 5'-deoxyadenosine + 2 L-methionine + 2 oxidized [2Fe-2S]-[ferredoxin]. It functions in the pathway cofactor biosynthesis; biotin biosynthesis; biotin from 7,8-diaminononanoate: step 2/2. In terms of biological role, catalyzes the conversion of dethiobiotin (DTB) to biotin by the insertion of a sulfur atom into dethiobiotin via a radical-based mechanism. The polypeptide is Biotin synthase (Burkholderia thailandensis (strain ATCC 700388 / DSM 13276 / CCUG 48851 / CIP 106301 / E264)).